The chain runs to 817 residues: Collagen-like protein 4 (817 aa).

Collagen-like domains follow at residues 83 to 142 (GDTG…KGQD), 145 to 264 (GSKG…KGDD), and 268 to 327 (GIQG…KGLK). Disordered regions lie at residues 87-107 (NKGE…GDNG), 120-458 (FNGS…DKGD), and 479-543 (IIGD…KGDI). Residues asparagine 106 and asparagine 121 are each glycosylated (N-linked (GlcNAc...) asparagine; by host). Composition is skewed to basic and acidic residues over residues 126-141 (IKGD…DKGQ) and 149-161 (QKGE…DDGI). Asparagine 183 is a glycosylation site (N-linked (GlcNAc...) asparagine; by host). Composition is skewed to basic and acidic residues over residues 212-224 (IKGD…EDGI) and 233-245 (SKGE…DDGT). Positions 246 to 260 (KGITGLKGTKGNSGS) are enriched in low complexity. Basic and acidic residues predominate over residues 294–341 (KGSDGDKGNKGLDGIKGDLGDDGIKGDKGIKGLKGDTGNSDKGDKGSK). Asparagine 345 and asparagine 360 each carry an N-linked (GlcNAc...) asparagine; by host glycan. Collagen-like domains follow at residues 352–411 (GDKG…KGLV) and 430–489 (GDKG…KGIK). 3 stretches are compositionally biased toward basic and acidic residues: residues 354-368 (KGSK…ESGD), 377-390 (SKGD…KGDL), and 428-458 (SKGD…DKGD). The span at 480–494 (IGDNGSKGIKGSSNN) shows a compositional bias: low complexity. A glycan (N-linked (GlcNAc...) asparagine; by host) is linked at asparagine 483. Composition is skewed to basic and acidic residues over residues 495–504 (KGDKGDKGNT), 515–525 (IKGDKGIKGSK), and 533–543 (EKGEKGTKGDI). The 59-residue stretch at 512–570 (TKGIKGDKGIKGSKGDLGSVGEKGEKGTKGDIGTKGETGLKGIIGDKGELGSKGIKGLS) folds into the Collagen-like 6 domain. N-linked (GlcNAc...) asparagine; by host glycans are attached at residues asparagine 709, asparagine 712, and asparagine 715. Gly residues predominate over residues 757–771 (GGGGASAFGNGGRGG). The tract at residues 757–804 (GGGGASAFGNGGRGGNTTQAATKGEYGSGGGGGSEFSPSGSTNGGDGG) is disordered. Asparagine 772 carries N-linked (GlcNAc...) asparagine; by host glycosylation.

May be hydroxylated on lysine by the viral-encoded procollagen-lysine,2-oxoglutarate 5-dioxygenase.

The protein localises to the virion. May participate in the formation of a layer of cross-linked glycosylated fibrils at the viral surface thus giving it a hairy-like appearance. The chain is Collagen-like protein 4 from Acanthamoeba polyphaga (Amoeba).